The primary structure comprises 163 residues: Protein-export protein SecB (163 aa).

This sequence belongs to the SecB family. As to quaternary structure, homotetramer, a dimer of dimers. One homotetramer interacts with 1 SecA dimer.

The protein localises to the cytoplasm. Its function is as follows. One of the proteins required for the normal export of preproteins out of the cell cytoplasm. It is a molecular chaperone that binds to a subset of precursor proteins, maintaining them in a translocation-competent state. It also specifically binds to its receptor SecA. The protein is Protein-export protein SecB of Brucella canis (strain ATCC 23365 / NCTC 10854 / RM-666).